Consider the following 496-residue polypeptide: Cytochrome P450 monooxygenase claT (496 aa).

Residues 2 to 22 traverse the membrane as a helical segment; the sequence is LSLIVEATLLLVVLVLSAHYV. Cys423 contacts heme.

Belongs to the cytochrome P450 family. Heme is required as a cofactor.

It localises to the membrane. It carries out the reaction wigandol + 4 reduced [NADPH--hemoprotein reductase] + 4 O2 = arnebinol A + 4 oxidized [NADPH--hemoprotein reductase] + 6 H2O + 4 H(+). The enzyme catalyses arnebinol A + reduced [NADPH--hemoprotein reductase] + O2 = clavilactone A + oxidized [NADPH--hemoprotein reductase] + H2O + H(+). The catalysed reaction is (2E)-geranylhydroquinone + reduced [NADPH--hemoprotein reductase] + O2 = isoalliodorol + oxidized [NADPH--hemoprotein reductase] + H2O + H(+). Its pathway is secondary metabolite biosynthesis; terpenoid biosynthesis. Functionally, cytochrome P450 monooxygenase; part of the gene cluster that mediates the biosynthesis of clavilactone A, a meroterpenoid that features a unique benzo-fused ten-membered carbocyclic ring unit with an alpha,beta-epoxy-gamma-lactone moiety, forming an intriguing 10/5/3 tricyclic nested skeleton. ClaR, ClaS and ClaT are sufficient to produce clavilactone A. Within the pathway, claT acts as a multifunctional cytochrome P450 monooxygenase that catalyzes a ten-electron oxidation to accomplish the biosynthesis of the 10/5/3 tricyclic nested skeleton in clavilactones. The biosynthesis begins with the prenyltransferase claS that transfers geranyl pyrophosphate (GPP) to hydroquinone to produces geranylhydroquinone. The cytochrome P450 monooxygenase claR then catalyzes the diradical coupling reaction between the intramolecular hydroquinone and allyl moieties to form the benzo-fused ten-membered carbocyclic ring unit of wigantol. Finally the cytochrome P450 monooxygenase claT exquisitely and stereoselectively assembles the alpha,beta-epoxy-gamma-lactone moiety, producing clavilactone A via arnebinol A. The sequence is that of Cytochrome P450 monooxygenase claT from Ampulloclitocybe clavipes (Club foot).